The following is a 328-amino-acid chain: Nickel import system permease protein NikB (328 aa).

The next 6 helical transmembrane spans lie at 11–31 (LMQM…LMKL), 104–124 (LLIS…LGII), 139–159 (VIST…LLFI), 170–190 (ILSQ…AYII), 229–249 (ILPI…GTVV), and 279–299 (VLFI…LTLL). In terms of domain architecture, ABC transmembrane type-1 spans 100–297 (APITLLISFS…IINTIADLLT (198 aa)).

It belongs to the binding-protein-dependent transport system permease family. OppBC subfamily. The complex is composed of two ATP-binding proteins (NikD and NikE), two transmembrane proteins (NikB and NikC) and a solute-binding protein (NikA).

The protein resides in the cell membrane. In terms of biological role, part of the ABC transporter complex NikABCDE (Opp2) involved in nickel import. Probably responsible for the translocation of the substrate across the membrane. This Staphylococcus aureus (strain bovine RF122 / ET3-1) protein is Nickel import system permease protein NikB.